Here is a 217-residue protein sequence, read N- to C-terminus: Ribonuclease HII (217 aa).

In terms of domain architecture, RNase H type-2 spans 34–217; that stretch reads WPVAGTDEAG…RMSFRPLKRD (184 aa). Residues Asp-40, Glu-41, and Asp-131 each contribute to the a divalent metal cation site.

The protein belongs to the RNase HII family. It depends on Mn(2+) as a cofactor. Requires Mg(2+) as cofactor.

It localises to the cytoplasm. The enzyme catalyses Endonucleolytic cleavage to 5'-phosphomonoester.. Its function is as follows. Endonuclease that specifically degrades the RNA of RNA-DNA hybrids. This chain is Ribonuclease HII, found in Agrobacterium fabrum (strain C58 / ATCC 33970) (Agrobacterium tumefaciens (strain C58)).